The chain runs to 249 residues: Proteasome subunit alpha type-7-B (249 aa).

It belongs to the peptidase T1A family. As to quaternary structure, the 26S proteasome consists of a 20S proteasome core and two 19S regulatory subunits. The 20S proteasome core is composed of 28 subunits that are arranged in four stacked rings, resulting in a barrel-shaped structure. The two end rings are each formed by seven alpha subunits, and the two central rings are each formed by seven beta subunits. The catalytic chamber with the active sites is on the inside of the barrel.

The protein resides in the cytoplasm. It is found in the nucleus. In terms of biological role, the proteasome is a multicatalytic proteinase complex which is characterized by its ability to cleave peptides with Arg, Phe, Tyr, Leu, and Glu adjacent to the leaving group at neutral or slightly basic pH. The proteasome has an ATP-dependent proteolytic activity. This Oryza sativa subsp. indica (Rice) protein is Proteasome subunit alpha type-7-B (PAD1).